The primary structure comprises 278 residues: Putative protein-disulfide oxidoreductase RF_0032 (278 aa).

An N-terminal signal peptide occupies residues 1-18 (MRSIFIVPIFLLFLSSCS). The disordered stretch occupies residues 62–84 (VPANDNNQTDEVSTPPSQEQKNP). Residues 65 to 81 (NDNNQTDEVSTPPSQEQ) are compositionally biased toward polar residues. Positions 77-266 (PSQEQKNPEI…ISTAVDKALE (190 aa)) constitute a Thioredoxin domain. C119 and C122 form a disulfide bridge.

It belongs to the thioredoxin family. DsbA subfamily.

It is found in the periplasm. In terms of biological role, may be required for disulfide bond formation in some proteins. The protein is Putative protein-disulfide oxidoreductase RF_0032 of Rickettsia felis (strain ATCC VR-1525 / URRWXCal2) (Rickettsia azadi).